The chain runs to 180 residues: Probable chorismate pyruvate-lyase (180 aa).

Residues Arg82, Leu120, and Glu165 each contribute to the substrate site.

This sequence belongs to the UbiC family.

The protein resides in the cytoplasm. The catalysed reaction is chorismate = 4-hydroxybenzoate + pyruvate. Its pathway is cofactor biosynthesis; ubiquinone biosynthesis. Its function is as follows. Removes the pyruvyl group from chorismate, with concomitant aromatization of the ring, to provide 4-hydroxybenzoate (4HB) for the ubiquinone pathway. The protein is Probable chorismate pyruvate-lyase of Photobacterium profundum (strain SS9).